A 178-amino-acid chain; its full sequence is Inorganic pyrophosphatase (178 aa).

Positions 31, 45, and 57 each coordinate substrate. Mg(2+) contacts are provided by aspartate 67, aspartate 72, and aspartate 104. Residue tyrosine 141 coordinates substrate.

It belongs to the PPase family. In terms of assembly, homohexamer. Mg(2+) is required as a cofactor.

Its subcellular location is the cytoplasm. It carries out the reaction diphosphate + H2O = 2 phosphate + H(+). Functionally, catalyzes the hydrolysis of inorganic pyrophosphate (PPi) forming two phosphate ions. The polypeptide is Inorganic pyrophosphatase (Leptospira interrogans serogroup Icterohaemorrhagiae serovar copenhageni (strain Fiocruz L1-130)).